A 407-amino-acid chain; its full sequence is 4-hydroxy-3-methylbut-2-en-1-yl diphosphate synthase (ferredoxin) (407 aa).

[4Fe-4S] cluster-binding residues include Cys-312, Cys-315, Cys-346, and Glu-353.

The protein belongs to the IspG family. [4Fe-4S] cluster serves as cofactor.

It carries out the reaction (2E)-4-hydroxy-3-methylbut-2-enyl diphosphate + 2 oxidized [2Fe-2S]-[ferredoxin] + H2O = 2-C-methyl-D-erythritol 2,4-cyclic diphosphate + 2 reduced [2Fe-2S]-[ferredoxin] + H(+). It functions in the pathway isoprenoid biosynthesis; isopentenyl diphosphate biosynthesis via DXP pathway; isopentenyl diphosphate from 1-deoxy-D-xylulose 5-phosphate: step 5/6. Functionally, converts 2C-methyl-D-erythritol 2,4-cyclodiphosphate (ME-2,4cPP) into 1-hydroxy-2-methyl-2-(E)-butenyl 4-diphosphate. The protein is 4-hydroxy-3-methylbut-2-en-1-yl diphosphate synthase (ferredoxin) of Synechococcus elongatus (strain ATCC 33912 / PCC 7942 / FACHB-805) (Anacystis nidulans R2).